The primary structure comprises 151 residues: UPF0208 membrane protein KPN78578_26420 (151 aa).

The next 2 membrane-spanning stretches (helical) occupy residues 46–65 (YAIRIMPPIAIFTLCWQIAL) and 69–91 (LGPAVATALFALSLPMQGLWWLG).

It belongs to the UPF0208 family.

It is found in the cell inner membrane. The sequence is that of UPF0208 membrane protein KPN78578_26420 from Klebsiella pneumoniae subsp. pneumoniae (strain ATCC 700721 / MGH 78578).